Consider the following 231-residue polypeptide: Small ribosomal subunit protein uS3c (231 aa).

Residues 39-123 enclose the KH type-2 domain; that stretch reads LRNFIKKKYI…HLRLSVKPLR (85 aa).

Belongs to the universal ribosomal protein uS3 family. In terms of assembly, part of the 30S ribosomal subunit.

The protein resides in the plastid. It is found in the chloroplast. This Chlorella vulgaris (Green alga) protein is Small ribosomal subunit protein uS3c (rps3).